The primary structure comprises 587 residues: MTLHTKTSGVTLLHQIQGTELETLSRPQLKIPLERSLSDMYVETNKTGVFNYPEGATYDFGTTAPVYSSTTLSYAPTSESFGSSSLAGFHSLNSVPPSPVVFLQTAPHWSPFIHHHSQQVPYYLENDQGSFGMREAAPPAFYRPNSDNRRHSIRERMSSANEKGSLSMESTKETRYCAVCNDYASGYHYGVWSCEGCKAFFKRSIQGHNDYMCPATNQCTIDKNRRKSCQACRLRKCYEVGMMKGGIRKDRRGGRVMKQKRQREEQDSRNGEASSTELRAPTLWASPLVVKHNKKNSPALSLTAEQMVSALLEAEPPLVYSEYDPNRPFNEASMMTLLTNLADRELVHMINWAKRVPGFVDLTLHDQVHLLECAWLEILMIGLVWRSMEHPGKLLFAPNLLLDRNQGKCVEGMVEIFDMLLATAARFRMMNLQGEEFVCLKSIILLNSGVYTFLSSTLKSLEEKDYIHRVLDKITDTLIHLMAKSGLSLQQQHRRLAQLLLILSHIRHMSNKGMEHLYNMKCKNVVPLYDLLLEMLDAHRLHAPAARSAAPMEEENRSQLTTASASSHSLQSFYINSKEEENMQNTL.

A modulating (transactivation AF-1) region spans residues 1-176 (MTLHTKTSGV…SMESTKETRY (176 aa)). NR C4-type zinc fingers lie at residues 177–197 (CAVC…CEGC) and 213–237 (CPAT…LRKC). The segment at residues 177–242 (CAVCNDYASG…RLRKCYEVGM (66 aa)) is a DNA-binding region (nuclear receptor). Residues 243-302 (MKGGIRKDRRGGRVMKQKRQREEQDSRNGEASSTELRAPTLWASPLVVKHNKKNSPALSL) form a hinge region. The segment at 248–277 (RKDRRGGRVMKQKRQREEQDSRNGEASSTE) is disordered. The span at 249 to 261 (KDRRGGRVMKQKR) shows a compositional bias: basic residues. The 237-residue stretch at 303-539 (TAEQMVSALL…DLLLEMLDAH (237 aa)) folds into the NR LBD domain. The segment at 303–587 (TAEQMVSALL…KEEENMQNTL (285 aa)) is transactivation AF-2.

It belongs to the nuclear hormone receptor family. NR3 subfamily. In terms of assembly, binds DNA as a homodimer. Can form a heterodimer with ER-beta.

It localises to the nucleus. Functionally, the steroid hormones and their receptors are involved in the regulation of eukaryotic gene expression and affect cellular proliferation and differentiation in target tissues. This chain is Estrogen receptor (ESR1), found in Taeniopygia guttata (Zebra finch).